The following is a 143-amino-acid chain: Large ribosomal subunit protein uL13 (143 aa).

It belongs to the universal ribosomal protein uL13 family. Part of the 50S ribosomal subunit.

Its function is as follows. This protein is one of the early assembly proteins of the 50S ribosomal subunit, although it is not seen to bind rRNA by itself. It is important during the early stages of 50S assembly. The sequence is that of Large ribosomal subunit protein uL13 from Caldanaerobacter subterraneus subsp. tengcongensis (strain DSM 15242 / JCM 11007 / NBRC 100824 / MB4) (Thermoanaerobacter tengcongensis).